Reading from the N-terminus, the 211-residue chain is Thiamine-phosphate synthase (211 aa).

4-amino-2-methyl-5-(diphosphooxymethyl)pyrimidine is bound by residues Q37–K41 and N69. D70 and D89 together coordinate Mg(2+). Residue S108 coordinates 4-amino-2-methyl-5-(diphosphooxymethyl)pyrimidine. 2-[(2R,5Z)-2-carboxy-4-methylthiazol-5(2H)-ylidene]ethyl phosphate is bound at residue T134–T136. 4-amino-2-methyl-5-(diphosphooxymethyl)pyrimidine is bound at residue K137. Residues G166 and V186 to S187 each bind 2-[(2R,5Z)-2-carboxy-4-methylthiazol-5(2H)-ylidene]ethyl phosphate.

It belongs to the thiamine-phosphate synthase family. Mg(2+) is required as a cofactor.

The enzyme catalyses 2-[(2R,5Z)-2-carboxy-4-methylthiazol-5(2H)-ylidene]ethyl phosphate + 4-amino-2-methyl-5-(diphosphooxymethyl)pyrimidine + 2 H(+) = thiamine phosphate + CO2 + diphosphate. It carries out the reaction 2-(2-carboxy-4-methylthiazol-5-yl)ethyl phosphate + 4-amino-2-methyl-5-(diphosphooxymethyl)pyrimidine + 2 H(+) = thiamine phosphate + CO2 + diphosphate. It catalyses the reaction 4-methyl-5-(2-phosphooxyethyl)-thiazole + 4-amino-2-methyl-5-(diphosphooxymethyl)pyrimidine + H(+) = thiamine phosphate + diphosphate. It participates in cofactor biosynthesis; thiamine diphosphate biosynthesis; thiamine phosphate from 4-amino-2-methyl-5-diphosphomethylpyrimidine and 4-methyl-5-(2-phosphoethyl)-thiazole: step 1/1. Condenses 4-methyl-5-(beta-hydroxyethyl)thiazole monophosphate (THZ-P) and 2-methyl-4-amino-5-hydroxymethyl pyrimidine pyrophosphate (HMP-PP) to form thiamine monophosphate (TMP). This is Thiamine-phosphate synthase from Salmonella paratyphi A (strain ATCC 9150 / SARB42).